Reading from the N-terminus, the 424-residue chain is Enolase (424 aa).

Residue Gln165 participates in (2R)-2-phosphoglycerate binding. Glu207 functions as the Proton donor in the catalytic mechanism. Positions 244, 283, and 310 each coordinate Mg(2+). 4 residues coordinate (2R)-2-phosphoglycerate: Lys335, Arg364, Ser365, and Lys386. The active-site Proton acceptor is the Lys335.

This sequence belongs to the enolase family. Mg(2+) is required as a cofactor.

It localises to the cytoplasm. The protein localises to the secreted. It is found in the cell surface. It carries out the reaction (2R)-2-phosphoglycerate = phosphoenolpyruvate + H2O. It participates in carbohydrate degradation; glycolysis; pyruvate from D-glyceraldehyde 3-phosphate: step 4/5. Its function is as follows. Catalyzes the reversible conversion of 2-phosphoglycerate (2-PG) into phosphoenolpyruvate (PEP). It is essential for the degradation of carbohydrates via glycolysis. The chain is Enolase from Chlamydia abortus (strain DSM 27085 / S26/3) (Chlamydophila abortus).